The primary structure comprises 135 residues: uncharacterized protein (135 aa).

The protein belongs to the asp23 family.

This is an uncharacterized protein from Bacillus subtilis (strain 168).